The chain runs to 724 residues: NAD(+) hydrolase SARM1 (724 aa).

The transit peptide at 1 to 27 directs the protein to the mitochondrion; the sequence is MVLTLLFSAYKLCRFFIMSGPRPGADR. The stretch at 60 to 100 is one ARM 1 repeat; sequence EVQGALERSLPELQQALSELKQASAAQAVGAGLAEVFQLVE. NAD(+) contacts are provided by residues Trp103, Arg110, 149-157, and 190-193; these read EQILVAENR and HMFK. ARM repeat units follow at residues 114–153, 155–193, 196–235, 237–280, 281–314, 315–354, and 359–402; these read QGLCDAIRLDGGLDLLLRLLQAPELETRVQAARLLEQILV, ENRDRVARIGLGVILNLSKEREPVELARSVAGILEHMFK, EETCQRLVAAGGLDAVLYWCRRTDPALLRHCALALANCAL, GGQT…LATN, KEVEREVEHSGTLALVEPLVASLDPGRFARCLVD, ASDTSQGRGPDDLQSLVLLLDSSRLEAQCIGAFYLCAEAA, and QGKT…EEVP. 2 consecutive SAM domains span residues 412-476 and 486-548; these read WKEA…LKTF and NLAD…MLHS. Residues Ser548 and Ser558 each carry the phosphoserine modification. Residues 560-703 form the TIR domain; sequence DTPDVFISYR…KIIRFLQGRP (144 aa). Residues 569–570 and Glu599 contribute to the NAD(+) site; that span reads RR. The active site involves Glu642. Polar residues predominate over residues 703–717; sequence PSQDSSAGSDTSLEG. The segment at 703-724 is disordered; the sequence is PSQDSSAGSDTSLEGATSMGLP.

Belongs to the SARM1 family. Homooctamer; forms an octameric ring via SAM domains. Interacts with TICAM1/TRIF and thereby interferes with TICAM1/TRIF function. Interacts with MAPK10/JNK3 and SDC2 (via cytoplasmic domain). Post-translationally, phosphorylation at Ser-548 by JNK kinases (MAPK8, MAPK9 and /or MAPK10) enhance the NAD(+) hydrolase (NADase) activity. Phosphorylation at Ser-548 and subsequent activation takes place in response to oxidative stress conditions and inhibits mitochondrial respiration. Phosphorylation at Ser-548 increases in response to cerebral ischemia/reperfusion (I/R) injury.

Its subcellular location is the cytoplasm. The protein localises to the cell projection. It is found in the axon. The protein resides in the dendrite. It localises to the synapse. Its subcellular location is the mitochondrion. The catalysed reaction is NAD(+) + H2O = ADP-D-ribose + nicotinamide + H(+). It carries out the reaction NAD(+) = cyclic ADP-beta-D-ribose + nicotinamide + H(+). It catalyses the reaction NADP(+) + H2O = ADP-D-ribose 2'-phosphate + nicotinamide + H(+). Autoinhibited: in the inactive state, the enzymatic TIR domain is held apart by the autoinhibiting ARM repeats. NAD(+)-binding to ARM repeats maintains an inactive state by promoting interaction between ARM repeats and the TIR domain, thereby facilitating inhibition of the enzymatic TIR domain. Following activation, possibly by nicotinamide mononucleotide (NMN), auto-inhibitory interactions are released, allowing self-association of the TIR domains and subsequent activation of the NAD(+) hydrolase (NADase) activity. Self-association of TIR domains is facilitated by the octamer of SAM domains. In terms of biological role, NAD(+) hydrolase, which plays a key role in axonal degeneration following injury by regulating NAD(+) metabolism. Acts as a negative regulator of MYD88- and TRIF-dependent toll-like receptor signaling pathway by promoting Wallerian degeneration, an injury-induced form of programmed subcellular death which involves degeneration of an axon distal to the injury site. Wallerian degeneration is triggered by NAD(+) depletion: in response to injury, SARM1 is activated and catalyzes cleavage of NAD(+) into ADP-D-ribose (ADPR), cyclic ADPR (cADPR) and nicotinamide; NAD(+) cleavage promoting cytoskeletal degradation and axon destruction. Also able to hydrolyze NADP(+), but not other NAD(+)-related molecules. Can activate neuronal cell death in response to stress. Regulates dendritic arborization through the MAPK4-JNK pathway. Involved in innate immune response: inhibits both TICAM1/TRIF- and MYD88-dependent activation of JUN/AP-1, TRIF-dependent activation of NF-kappa-B and IRF3, and the phosphorylation of MAPK14/p38. The polypeptide is NAD(+) hydrolase SARM1 (Rattus norvegicus (Rat)).